We begin with the raw amino-acid sequence, 323 residues long: Beta-ketoacyl-[acyl-carrier-protein] synthase III (323 aa).

Residues cysteine 113 and histidine 250 contribute to the active site. An ACP-binding region spans residues 251–255 (QANKR). Residue asparagine 280 is part of the active site.

This sequence belongs to the thiolase-like superfamily. FabH family. Homodimer.

It is found in the cytoplasm. It carries out the reaction malonyl-[ACP] + acetyl-CoA + H(+) = 3-oxobutanoyl-[ACP] + CO2 + CoA. It functions in the pathway lipid metabolism; fatty acid biosynthesis. In terms of biological role, catalyzes the condensation reaction of fatty acid synthesis by the addition to an acyl acceptor of two carbons from malonyl-ACP. Catalyzes the first condensation reaction which initiates fatty acid synthesis and may therefore play a role in governing the total rate of fatty acid production. Possesses both acetoacetyl-ACP synthase and acetyl transacylase activities. Its substrate specificity determines the biosynthesis of branched-chain and/or straight-chain of fatty acids. The protein is Beta-ketoacyl-[acyl-carrier-protein] synthase III of Brucella anthropi (strain ATCC 49188 / DSM 6882 / CCUG 24695 / JCM 21032 / LMG 3331 / NBRC 15819 / NCTC 12168 / Alc 37) (Ochrobactrum anthropi).